The sequence spans 344 residues: Phenylalanine--tRNA ligase alpha subunit (344 aa).

A Mg(2+)-binding site is contributed by glutamate 256.

It belongs to the class-II aminoacyl-tRNA synthetase family. Phe-tRNA synthetase alpha subunit type 1 subfamily. Tetramer of two alpha and two beta subunits. Requires Mg(2+) as cofactor.

The protein resides in the cytoplasm. The catalysed reaction is tRNA(Phe) + L-phenylalanine + ATP = L-phenylalanyl-tRNA(Phe) + AMP + diphosphate + H(+). In Bacillus licheniformis (strain ATCC 14580 / DSM 13 / JCM 2505 / CCUG 7422 / NBRC 12200 / NCIMB 9375 / NCTC 10341 / NRRL NRS-1264 / Gibson 46), this protein is Phenylalanine--tRNA ligase alpha subunit.